A 65-amino-acid polypeptide reads, in one-letter code: Large ribosomal subunit protein bL35 (65 aa).

Belongs to the bacterial ribosomal protein bL35 family.

The protein is Large ribosomal subunit protein bL35 of Edwardsiella ictaluri (strain 93-146).